Reading from the N-terminus, the 143-residue chain is Large ribosomal subunit protein eL28y (143 aa).

It belongs to the eukaryotic ribosomal protein eL28 family.

The protein is Large ribosomal subunit protein eL28y (RPL28C) of Arabidopsis thaliana (Mouse-ear cress).